We begin with the raw amino-acid sequence, 677 residues long: Methionine--tRNA ligase (677 aa).

The 'HIGH' region signature appears at 15-25; sequence PYANGSIHLGH. Zn(2+) is bound by residues C146, C149, C159, and C162. The 'KMSKS' region motif lies at 333–337; the sequence is KMSKS. Residue K336 coordinates ATP. The region spanning 575-677 is the tRNA-binding domain; that stretch reads DFAKVDLRVA…DGAKPGQQVK (103 aa).

Belongs to the class-I aminoacyl-tRNA synthetase family. MetG type 1 subfamily. As to quaternary structure, homodimer. Zn(2+) serves as cofactor.

It is found in the cytoplasm. The catalysed reaction is tRNA(Met) + L-methionine + ATP = L-methionyl-tRNA(Met) + AMP + diphosphate. Is required not only for elongation of protein synthesis but also for the initiation of all mRNA translation through initiator tRNA(fMet) aminoacylation. This chain is Methionine--tRNA ligase, found in Salmonella schwarzengrund (strain CVM19633).